A 370-amino-acid polypeptide reads, in one-letter code: MTNANVDATPLTTKPSQDGFYMPAEWAAQQAVWMIWPYRPDNWRSAGAYAQATFAKVADAIGGATPVYMGVPKAFLAEAQKVMPSHVTLVEMDSNDCWARDTGPTVVVNDNGECRGVDWGFNAWGGHNGGLYFPWDKDEQVAQQMLKQHGFARYSAPLILEGGSIHVDGEGTCMTSAECLLNANRNPELTKEQIEDLLRDYLNVKQFIWLQDGVYMDETDGHIDNMCCFARPGEVILHWTDDETDPQYPRSKAALDVLQNTVDAQGRKLKIHLLPQPGPLYCTEEESLGVTEGTGVPRTAGERLAGSYVNFLITNNRIVFPMLDPATDDIAAQKLQEIFPEYEIIGVPAREILLGGGNIHCITQQIPSGK.

Cys-361 serves as the catalytic Amidino-cysteine intermediate.

The protein belongs to the agmatine deiminase family.

The catalysed reaction is agmatine + H2O = N-carbamoylputrescine + NH4(+). This chain is Putative agmatine deiminase, found in Shewanella baltica (strain OS155 / ATCC BAA-1091).